We begin with the raw amino-acid sequence, 889 residues long: Serine/threonine-protein kinase D3 (889 aa).

A phosphoserine mark is found at Ser27, Ser37, Ser41, and Ser44. Residues 154-204 (PHALYVHSYKAPTFCDYCGEMLWGLVRQGLKCEGCGLNYHKRCAFKIPNNC) form a Phorbol-ester/DAG-type 1 zinc finger. 2 positions are modified to phosphoserine: Ser213 and Ser216. The Phorbol-ester/DAG-type 2 zinc finger occupies 271–321 (PHTFAVHSYGRPTICQYCKRLLKGLFRQGMQCKDCKFNCHKRCASKVPRDC). The disordered stretch occupies residues 336-370 (TDADMPMDIDSSDVNSDGSRGLDDSEEPSPPEDKM). 3 positions are modified to phosphoserine: Ser346, Ser391, and Ser395. In terms of domain architecture, PH spans 416–532 (TVVKEGWMVH…WEKAIRQALM (117 aa)). Residue Tyr426 is modified to Phosphotyrosine. Ser442 carries the post-translational modification Phosphoserine. The residue at position 457 (Tyr457) is a Phosphotyrosine. Phosphothreonine is present on Thr535. The residue at position 539 (Ser539) is a Phosphoserine. The Protein kinase domain occupies 575 to 831 (IFADEVLGSG…VDKSLSHPWL (257 aa)). Residues 581–589 (LGSGQFGIV) and Lys604 contribute to the ATP site. Asp698 functions as the Proton acceptor in the catalytic mechanism. At Ser730 the chain carries Phosphoserine; by PKC. The residue at position 734 (Ser734) is a Phosphoserine; by autocatalysis. Tyr741 is modified (phosphotyrosine).

Belongs to the protein kinase superfamily. CAMK Ser/Thr protein kinase family. PKD subfamily. The cofactor is Mg(2+).

It localises to the cytoplasm. The protein localises to the membrane. The enzyme catalyses L-seryl-[protein] + ATP = O-phospho-L-seryl-[protein] + ADP + H(+). The catalysed reaction is L-threonyl-[protein] + ATP = O-phospho-L-threonyl-[protein] + ADP + H(+). With respect to regulation, activated by DAG and phorbol esters. Phorbol-ester/DAG-type domains 1 and 2 bind both DAG and phorbol ester with high affinity and mediate translocation to the cell membrane. Autophosphorylation of Ser-734 and phosphorylation of Ser-730 by PKC relieves auto-inhibition by the PH domain. Functionally, converts transient diacylglycerol (DAG) signals into prolonged physiological effects, downstream of PKC. Involved in resistance to oxidative stress. This chain is Serine/threonine-protein kinase D3 (Prkd3), found in Mus musculus (Mouse).